The sequence spans 325 residues: Solute-binding protein RD1_1052 (325 aa).

The signal sequence occupies residues 1–26 (MRLFTKIKGLAAVTCVAALASSAAFA). D-mannonate-binding positions include glutamate 75, 93–95 (GES), 148–151 (RGPR), arginine 171, and asparagine 211. L-galactonate-binding positions include glutamate 75, 93-95 (GES), 148-151 (RGPR), arginine 171, and asparagine 211.

The protein belongs to the bacterial solute-binding protein 7 family. As to quaternary structure, the complex is comprised of an extracytoplasmic solute-binding protein and a heteromeric permease formed by two transmembrane proteins.

It is found in the periplasm. In terms of biological role, solute-binding protein that binds L-galactonate and D-mannonate (in vitro). Probably part of a tripartite ATP-independent periplasmic (TRAP) transport system that mediates solute transport into the cytoplasm. In Roseobacter denitrificans (strain ATCC 33942 / OCh 114) (Erythrobacter sp. (strain OCh 114)), this protein is Solute-binding protein RD1_1052.